The chain runs to 20 residues: Phosphoglycerate kinase (20 aa).

The tract at residues 1–20 is disordered; the sequence is MNKKSIRNVNLKGKRVFDRV.

It belongs to the phosphoglycerate kinase family. Monomer.

It is found in the cytoplasm. The enzyme catalyses (2R)-3-phosphoglycerate + ATP = (2R)-3-phospho-glyceroyl phosphate + ADP. The protein operates within carbohydrate degradation; glycolysis; pyruvate from D-glyceraldehyde 3-phosphate: step 2/5. The protein is Phosphoglycerate kinase of Bacillus cereus.